We begin with the raw amino-acid sequence, 356 residues long: Histidinol-phosphate aminotransferase (356 aa).

Residue Lys-214 is modified to N6-(pyridoxal phosphate)lysine.

This sequence belongs to the class-II pyridoxal-phosphate-dependent aminotransferase family. Histidinol-phosphate aminotransferase subfamily. In terms of assembly, homodimer. Pyridoxal 5'-phosphate is required as a cofactor.

It catalyses the reaction L-histidinol phosphate + 2-oxoglutarate = 3-(imidazol-4-yl)-2-oxopropyl phosphate + L-glutamate. It participates in amino-acid biosynthesis; L-histidine biosynthesis; L-histidine from 5-phospho-alpha-D-ribose 1-diphosphate: step 7/9. This is Histidinol-phosphate aminotransferase from Aromatoleum aromaticum (strain DSM 19018 / LMG 30748 / EbN1) (Azoarcus sp. (strain EbN1)).